Reading from the N-terminus, the 150-residue chain is Large ribosomal subunit protein uL15 (150 aa).

The disordered stretch occupies residues 1–57 (MTLRLESLKPNKGARRRKLRKGRGIAAGQGASCGFGMRGQKSRSGRPTRPGFEGGQM). Residues 12-23 (KGARRRKLRKGR) show a composition bias toward basic residues. Gly residues predominate over residues 25-37 (IAAGQGASCGFGM).

The protein belongs to the universal ribosomal protein uL15 family. Part of the 50S ribosomal subunit.

Its function is as follows. Binds to the 23S rRNA. The protein is Large ribosomal subunit protein uL15 of Synechococcus sp. (strain CC9311).